Reading from the N-terminus, the 234-residue chain is MKDEEKNLIENLFHRLKKIELNCSERDDTADVLIQNLVKKQPYSSYYMVQTILIQETAIKKMNLKIEELKNQISILNSDQVNKKPSFLSNFLKKDPGSKTISYDNTIWKKNQNNLESCNTNIPSSSAATTRNSGFLKNALQTATGVAGGMILGNMLMNLFNHTTPEEEIFDNINQSSASDIDNEYDSIQNNHSDLVNYDNQNEPLENYSDDNNFSNFDETEHVDDSEMNDDNFI.

The segment at 199-234 is disordered; the sequence is DNQNEPLENYSDDNNFSNFDETEHVDDSEMNDDNFI.

This is an uncharacterized protein from Buchnera aphidicola subsp. Schizaphis graminum (strain Sg).